The sequence spans 226 residues: Chalcone--flavanone isomerase 1B-1 (226 aa).

Substrate contacts are provided by Thr50, Asn115, and Thr192.

The protein belongs to the chalcone isomerase family.

It catalyses the reaction a chalcone = a flavanone.. The protein operates within secondary metabolite biosynthesis; flavonoid biosynthesis. Catalyzes the intramolecular cyclization of bicyclic chalcones into tricyclic (S)-flavanones. Responsible for the isomerization of 4,2',4',6'-tetrahydroxychalcone (also termed chalcone) into naringenin. In Glycine max (Soybean), this protein is Chalcone--flavanone isomerase 1B-1 (CHI1B1).